A 157-amino-acid polypeptide reads, in one-letter code: 17.6 kDa class I heat shock protein 3 (157 aa).

One can recognise a sHSP domain in the interval Asp-43–Gly-157.

It belongs to the small heat shock protein (HSP20) family. As to quaternary structure, may form oligomeric structures.

It localises to the cytoplasm. This chain is 17.6 kDa class I heat shock protein 3 (HSP17.6C), found in Arabidopsis thaliana (Mouse-ear cress).